Reading from the N-terminus, the 377-residue chain is Chaperone protein DnaJ (377 aa).

Residues 5–70 (DYYEVLGVGR…NKKAAYDQFG (66 aa)) form the J domain. The CR-type zinc-finger motif lies at 133-211 (GLTKELRIPT…CHGDGRVEKT (79 aa)). Residues Cys-146, Cys-149, Cys-163, Cys-166, Cys-185, Cys-188, Cys-199, and Cys-202 each contribute to the Zn(2+) site. CXXCXGXG motif repeat units lie at residues 146–153 (CDVCDGSG), 163–170 (CGTCHGQG), 185–192 (CPTCHGRG), and 199–206 (CSKCHGDG).

This sequence belongs to the DnaJ family. In terms of assembly, homodimer. The cofactor is Zn(2+).

It localises to the cytoplasm. In terms of biological role, participates actively in the response to hyperosmotic and heat shock by preventing the aggregation of stress-denatured proteins and by disaggregating proteins, also in an autonomous, DnaK-independent fashion. Unfolded proteins bind initially to DnaJ; upon interaction with the DnaJ-bound protein, DnaK hydrolyzes its bound ATP, resulting in the formation of a stable complex. GrpE releases ADP from DnaK; ATP binding to DnaK triggers the release of the substrate protein, thus completing the reaction cycle. Several rounds of ATP-dependent interactions between DnaJ, DnaK and GrpE are required for fully efficient folding. Also involved, together with DnaK and GrpE, in the DNA replication of plasmids through activation of initiation proteins. This chain is Chaperone protein DnaJ, found in Shewanella sp. (strain ANA-3).